The following is a 179-amino-acid chain: Large ribosomal subunit protein uL5 (179 aa).

This sequence belongs to the universal ribosomal protein uL5 family. As to quaternary structure, part of the 50S ribosomal subunit; part of the 5S rRNA/L5/L18/L25 subcomplex. Contacts the 5S rRNA and the P site tRNA. Forms a bridge to the 30S subunit in the 70S ribosome.

This is one of the proteins that bind and probably mediate the attachment of the 5S RNA into the large ribosomal subunit, where it forms part of the central protuberance. In the 70S ribosome it contacts protein S13 of the 30S subunit (bridge B1b), connecting the 2 subunits; this bridge is implicated in subunit movement. Contacts the P site tRNA; the 5S rRNA and some of its associated proteins might help stabilize positioning of ribosome-bound tRNAs. The sequence is that of Large ribosomal subunit protein uL5 from Buchnera aphidicola subsp. Schizaphis graminum (strain Sg).